The chain runs to 350 residues: MALDPAKQKAIDMALAQIEKQFGKGSIMRLGEQMSRLNVEVIPTGSVALDVALGVGGLPRGRITEIYGPESSGKTTVALHVIAEAQKMGGVAAFVDAEHALDPVYAQALGVDIDNLLVSQPDTGEQALEITETLVRSGAVDVVVVDSVAALVPKAEIEGEMGDSFVGLQARLMSQALRKLTGAISKSKAVVIFINQIREKVGVMFGNPETTPGGRALKFYSSVRLEVRKTETLKSGQEVVGSRTRVKVVKNKVAPPFKQAEFDILYGQGISKEGSLIDIGTELNPPVIVKSGAWYSYGDLRIGQGKDNARDWLRQHPEVAAEIEQKIKERLNVASLPVKYADEEAGDADV.

68-75 (GPESSGKT) is an ATP binding site.

Belongs to the RecA family.

The protein resides in the cytoplasm. Can catalyze the hydrolysis of ATP in the presence of single-stranded DNA, the ATP-dependent uptake of single-stranded DNA by duplex DNA, and the ATP-dependent hybridization of homologous single-stranded DNAs. It interacts with LexA causing its activation and leading to its autocatalytic cleavage. This Symbiobacterium thermophilum (strain DSM 24528 / JCM 14929 / IAM 14863 / T) protein is Protein RecA.